We begin with the raw amino-acid sequence, 426 residues long: tRNA modification GTPase MnmE (426 aa).

Positions 20, 77, and 117 each coordinate (6S)-5-formyl-5,6,7,8-tetrahydrofolate. A TrmE-type G domain is found at 213-350 (GFEVAILGAP…LLTDIEGVLS (138 aa)). Position 223 (N223) interacts with K(+). GTP is bound by residues 223 to 228 (NAGKST), 242 to 248 (SDVPGTT), and 267 to 270 (DTAG). S227 is a Mg(2+) binding site. S242, V244, and T247 together coordinate K(+). A Mg(2+)-binding site is contributed by T248. K426 lines the (6S)-5-formyl-5,6,7,8-tetrahydrofolate pocket.

The protein belongs to the TRAFAC class TrmE-Era-EngA-EngB-Septin-like GTPase superfamily. TrmE GTPase family. Homodimer. Heterotetramer of two MnmE and two MnmG subunits. The cofactor is K(+).

The protein localises to the cytoplasm. Its function is as follows. Exhibits a very high intrinsic GTPase hydrolysis rate. Involved in the addition of a carboxymethylaminomethyl (cmnm) group at the wobble position (U34) of certain tRNAs, forming tRNA-cmnm(5)s(2)U34. The protein is tRNA modification GTPase MnmE of Jannaschia sp. (strain CCS1).